Consider the following 194-residue polypeptide: Ion-translocating oxidoreductase complex subunit A (194 aa).

The next 6 membrane-spanning stretches (helical) occupy residues Leu-4 to Gly-24, Ile-39 to Val-59, Phe-71 to Val-91, Val-102 to Leu-122, Phe-131 to Leu-151, and Ala-172 to Ile-192.

The protein belongs to the NqrDE/RnfAE family. As to quaternary structure, the complex is composed of six subunits: RnfA, RnfB, RnfC, RnfD, RnfE and RnfG.

The protein localises to the cell inner membrane. Its function is as follows. Part of a membrane-bound complex that couples electron transfer with translocation of ions across the membrane. In Ectopseudomonas mendocina (strain ymp) (Pseudomonas mendocina), this protein is Ion-translocating oxidoreductase complex subunit A.